The following is a 378-amino-acid chain: Erythronate-4-phosphate dehydrogenase (378 aa).

The substrate site is built by serine 45 and threonine 66. 2 residues coordinate NAD(+): aspartate 146 and threonine 175. Residue arginine 208 is part of the active site. Position 232 (aspartate 232) interacts with NAD(+). Residue glutamate 237 is part of the active site. Histidine 254 serves as the catalytic Proton donor. Glycine 257 is a binding site for NAD(+). Tyrosine 258 is a binding site for substrate.

Belongs to the D-isomer specific 2-hydroxyacid dehydrogenase family. PdxB subfamily. As to quaternary structure, homodimer.

It is found in the cytoplasm. It catalyses the reaction 4-phospho-D-erythronate + NAD(+) = (R)-3-hydroxy-2-oxo-4-phosphooxybutanoate + NADH + H(+). Its pathway is cofactor biosynthesis; pyridoxine 5'-phosphate biosynthesis; pyridoxine 5'-phosphate from D-erythrose 4-phosphate: step 2/5. Catalyzes the oxidation of erythronate-4-phosphate to 3-hydroxy-2-oxo-4-phosphonooxybutanoate. The polypeptide is Erythronate-4-phosphate dehydrogenase (Escherichia coli O7:K1 (strain IAI39 / ExPEC)).